We begin with the raw amino-acid sequence, 428 residues long: Adenylosuccinate synthetase (428 aa).

GTP-binding positions include 12 to 18 (GDEGKGK) and 40 to 42 (GHT). The active-site Proton acceptor is the D13. Mg(2+)-binding residues include D13 and G40. Residues 13-16 (DEGK), 38-41 (NAGH), T128, R142, Q223, T238, and R302 contribute to the IMP site. H41 functions as the Proton donor in the catalytic mechanism. Residue 298–304 (VTTGRPR) participates in substrate binding. Residues R304, 330-332 (KLD), and 412-414 (GTG) contribute to the GTP site.

It belongs to the adenylosuccinate synthetase family. Homodimer. The cofactor is Mg(2+).

It is found in the cytoplasm. It carries out the reaction IMP + L-aspartate + GTP = N(6)-(1,2-dicarboxyethyl)-AMP + GDP + phosphate + 2 H(+). It functions in the pathway purine metabolism; AMP biosynthesis via de novo pathway; AMP from IMP: step 1/2. In terms of biological role, plays an important role in the de novo pathway of purine nucleotide biosynthesis. Catalyzes the first committed step in the biosynthesis of AMP from IMP. The polypeptide is Adenylosuccinate synthetase (Bifidobacterium adolescentis (strain ATCC 15703 / DSM 20083 / NCTC 11814 / E194a)).